The chain runs to 80 residues: Cell division activator CedA (80 aa).

This sequence belongs to the CedA family.

In terms of biological role, activates the cell division inhibited by chromosomal DNA over-replication. The chain is Cell division activator CedA from Escherichia coli O139:H28 (strain E24377A / ETEC).